We begin with the raw amino-acid sequence, 965 residues long: Calsyntenin-2 (965 aa).

Positions 1 to 20 are cleaved as a signal peptide; it reads MLPGRLCLVPLLLALGVGSG. Residues 21 to 835 are Extracellular-facing; that stretch reads GGSGDGGDSR…SIQRSSVVPS (815 aa). Cadherin domains are found at residues 46–162 and 163–282; these read IETS…APTF and KEPA…MPLF. 2 N-linked (GlcNAc...) asparagine glycosylation sites follow: N58 and N100. Residues N344, N376, N720, and N733 are each glycosylated (N-linked (GlcNAc...) asparagine). A helical membrane pass occupies residues 836 to 856; that stretch reads IATVVIIISVCMLVFVVAMGV. Residues 857–965 are Cytoplasmic-facing; that stretch reads YRVRIAHQHF…NTAGVINIWK (109 aa). A disordered region spans residues 891–965; sequence PMEKHEGPGH…NTAGVINIWK (75 aa). Positions 892–902 are enriched in basic and acidic residues; it reads MEKHEGPGHGE. Residues 903-915 are compositionally biased toward acidic residues; the sequence is DETEGEEEEEAEE. Over residues 942–959 the composition is skewed to polar residues; that stretch reads QSGTSSQRPERSTWNTAG.

Belongs to the calsyntenin family. Proteolytically processed under normal cellular conditions. A primary zeta-cleavage generates a large extracellular (soluble) N-terminal domain (sAlc) and a short C-terminal transmembrane fragment (CTF1). A secondary cleavage catalyzed by gamma-secretase within the transmembrane domain releases the beta-Alc-gamma chain in the extracellular milieu and produces an intracellular fragment (AlcICD). This processing is strongly suppressed in the tripartite complex formed with APBA2 and APP, which seems to prevent the association with PSEN1.

It localises to the postsynaptic cell membrane. The protein resides in the endoplasmic reticulum membrane. It is found in the golgi apparatus membrane. The protein localises to the cell projection. Its subcellular location is the dendrite. Its function is as follows. Postsynaptic adhesion molecule that binds to presynaptic neurexins to mediate synapse formation, and which is involved in learning and memory. Promotes synapse development by acting as a cell adhesion molecule at the postsynaptic membrane, which associates with neurexin-alpha at the presynaptic membrane. The polypeptide is Calsyntenin-2 (Rattus norvegicus (Rat)).